The sequence spans 144 residues: 3-hydroxyacyl-[acyl-carrier-protein] dehydratase FabZ (144 aa).

The active site involves histidine 48.

It belongs to the thioester dehydratase family. FabZ subfamily.

It is found in the cytoplasm. It carries out the reaction a (3R)-hydroxyacyl-[ACP] = a (2E)-enoyl-[ACP] + H2O. Its function is as follows. Involved in unsaturated fatty acids biosynthesis. Catalyzes the dehydration of short chain beta-hydroxyacyl-ACPs and long chain saturated and unsaturated beta-hydroxyacyl-ACPs. The polypeptide is 3-hydroxyacyl-[acyl-carrier-protein] dehydratase FabZ (Listeria innocua serovar 6a (strain ATCC BAA-680 / CLIP 11262)).